A 243-amino-acid polypeptide reads, in one-letter code: R-spondin-2 (243 aa).

The first 21 residues, 1–21 (MQFQLFSFALIILNCVDYSHC), serve as a signal peptide directing secretion. 11 disulfide bridges follow: C40–C46, C43–C52, C55–C74, C78–C93, C96–C104, C101–C110, C113–C124, C128–C141, C145–C187, C156–C163, and C196–C203. An FU repeat occupies 90-134 (MNRCSRCRIENCDSCFSRDFCIKCKSGFYSLKGQCFEECPEGFAP). One can recognise a TSP type-1 domain in the interval 144-204 (GCEVGPWSEW…RCKMAIRHCP (61 aa)). Residue N160 is glycosylated (N-linked (GlcNAc...) asparagine). A compositionally biased stretch (basic residues) spans 204 to 224 (PGGKRTTKKKDKRNKKKKKKL). The interval 204–243 (PGGKRTTKKKDKRNKKKKKKLLERAQEQHSVVLATDRSSQ) is disordered.

Belongs to the R-spondin family. As to quaternary structure, binds heparin.

The protein localises to the secreted. In terms of biological role, activator of the canonical Wnt signaling pathway by acting as a ligand for lgr4-6 receptors. Upon binding to lgr4-6 (lgr4, lgr5 or lgr6), lgr4-6 associate with phosphorylated lrp6 and frizzled receptors that are activated by extracellular Wnt receptors, triggering the canonical Wnt signaling pathway to increase expression of target genes. Acts both in the canonical Wnt/beta-catenin-dependent pathway and in non-canonical Wnt signaling pathway. Activates neural markers and promotes muscle formation. Overexpression blocks activin, nodal and BMP4 signaling, suggesting that it may negatively regulate the TGF-beta pathway. During embryonic development, plays a crucial role in limb specification, amplifying the Wnt signaling pathway independently of LGR4-6 receptors, possibly by acting as a direct antagonistic ligand to RNF43 and ZNRF3, hence governing the number of limbs an embryo should form. This Xenopus laevis (African clawed frog) protein is R-spondin-2 (rspo2).